The primary structure comprises 383 residues: Insulinoma-associated protein 1a (383 aa).

The SNAG domain stretch occupies residues 1–20; it reads MPRGFLVKRNKKATPVSYRV. Disordered regions lie at residues 99-141 and 229-269; these read PVDL…AMRK and RWHK…SEDG. The span at 105-120 shows a compositional bias: polar residues; the sequence is GTSNSNRTGTTVTTKR. Over residues 130 to 140 the composition is skewed to basic residues; it reads KPASKKAKAMR. Residues 209–231 form a C2H2-type 1 zinc finger; sequence YRCPECDKLFSCPANLASHRRWH. Basic and acidic residues predominate over residues 244–256; the sequence is APEKEETSSDRDT. A C2H2-type 2; degenerate zinc finger spans residues 271 to 295; that stretch reads YDCQHCGKKFKRQAYLKKHVTAHHD. 2 consecutive C2H2-type zinc fingers follow at residues 314-337 and 342-365; these read HLCP…RLQH and YPCK…NKCH.

This sequence belongs to the INSM1 family.

It is found in the nucleus. In terms of biological role, may act as a transcriptional regulator. May play a role in neurogenesis and neuroendocrine cell differentiation during embryonic development. In Danio rerio (Zebrafish), this protein is Insulinoma-associated protein 1a (insm1a).